The primary structure comprises 254 residues: 4-hydroxy-tetrahydrodipicolinate reductase (254 aa).

13–18 contacts NAD(+); the sequence is GAAGRM. Residue Arg39 participates in NADP(+) binding. Residues 86–88 and 110–113 contribute to the NAD(+) site; these read GTT and AANT. His143 acts as the Proton donor/acceptor in catalysis. A (S)-2,3,4,5-tetrahydrodipicolinate-binding site is contributed by His144. Lys147 acts as the Proton donor in catalysis. (S)-2,3,4,5-tetrahydrodipicolinate is bound at residue 153-154; sequence GT.

This sequence belongs to the DapB family.

The protein resides in the cytoplasm. The catalysed reaction is (S)-2,3,4,5-tetrahydrodipicolinate + NAD(+) + H2O = (2S,4S)-4-hydroxy-2,3,4,5-tetrahydrodipicolinate + NADH + H(+). The enzyme catalyses (S)-2,3,4,5-tetrahydrodipicolinate + NADP(+) + H2O = (2S,4S)-4-hydroxy-2,3,4,5-tetrahydrodipicolinate + NADPH + H(+). It functions in the pathway amino-acid biosynthesis; L-lysine biosynthesis via DAP pathway; (S)-tetrahydrodipicolinate from L-aspartate: step 4/4. Catalyzes the conversion of 4-hydroxy-tetrahydrodipicolinate (HTPA) to tetrahydrodipicolinate. The polypeptide is 4-hydroxy-tetrahydrodipicolinate reductase (Zymomonas mobilis subsp. mobilis (strain ATCC 31821 / ZM4 / CP4)).